The sequence spans 415 residues: DNA polymerase IV (415 aa).

The UmuC domain occupies 15–196; that stretch reads ILHVDMNCFF…LSVEAMHGIG (182 aa). Mg(2+)-binding residues include aspartate 19 and aspartate 115. Glutamate 116 is an active-site residue. Residues 235-246 show a composition bias toward basic and acidic residues; that stretch reads KRAKGTDDREVD. Residues 235–260 are disordered; that stretch reads KRAKGTDDREVDPSQMGQHKSVGNSM. A compositionally biased stretch (polar residues) spans 249–260; that stretch reads QMGQHKSVGNSM.

It belongs to the DNA polymerase type-Y family. As to quaternary structure, monomer. Mg(2+) serves as cofactor.

Its subcellular location is the cytoplasm. It catalyses the reaction DNA(n) + a 2'-deoxyribonucleoside 5'-triphosphate = DNA(n+1) + diphosphate. Poorly processive, error-prone DNA polymerase involved in untargeted mutagenesis. Copies undamaged DNA at stalled replication forks, which arise in vivo from mismatched or misaligned primer ends. These misaligned primers can be extended by PolIV. Exhibits no 3'-5' exonuclease (proofreading) activity. May be involved in translesional synthesis, in conjunction with the beta clamp from PolIII. The sequence is that of DNA polymerase IV from Bacillus cereus (strain ATCC 14579 / DSM 31 / CCUG 7414 / JCM 2152 / NBRC 15305 / NCIMB 9373 / NCTC 2599 / NRRL B-3711).